Reading from the N-terminus, the 358-residue chain is Methylthioribose-1-phosphate isomerase (358 aa).

Substrate-binding positions include 54 to 56 (RGA), Arg-96, and Gln-205. Asp-246 functions as the Proton donor in the catalytic mechanism. 256–257 (NK) contributes to the substrate binding site.

The protein belongs to the eIF-2B alpha/beta/delta subunits family. MtnA subfamily.

It carries out the reaction 5-(methylsulfanyl)-alpha-D-ribose 1-phosphate = 5-(methylsulfanyl)-D-ribulose 1-phosphate. It participates in amino-acid biosynthesis; L-methionine biosynthesis via salvage pathway; L-methionine from S-methyl-5-thio-alpha-D-ribose 1-phosphate: step 1/6. Its function is as follows. Catalyzes the interconversion of methylthioribose-1-phosphate (MTR-1-P) into methylthioribulose-1-phosphate (MTRu-1-P). This chain is Methylthioribose-1-phosphate isomerase, found in Pseudomonas aeruginosa (strain UCBPP-PA14).